Here is a 479-residue protein sequence, read N- to C-terminus: Oxysterol-binding protein homolog C23B6.01c (479 aa).

Phosphoserine is present on residues serine 328, serine 408, serine 409, and serine 421. Positions 404–418 (KPEDSSIHKHSRDAS) are enriched in basic and acidic residues. The tract at residues 404–479 (KPEDSSIHKH…KLHEEQDPAL (76 aa)) is disordered. Residues 439 to 452 (QSTASFVTYRSDNG) show a composition bias toward polar residues. Basic and acidic residues predominate over residues 470–479 (KLHEEQDPAL).

The protein belongs to the OSBP family.

It is found in the cytoplasm. Its subcellular location is the nucleus. In Schizosaccharomyces pombe (strain 972 / ATCC 24843) (Fission yeast), this protein is Oxysterol-binding protein homolog C23B6.01c.